We begin with the raw amino-acid sequence, 266 residues long: Proteasome subunit alpha type-1 (266 aa).

A disordered region spans residues 235 to 266 (DGFKTRPEDIPAVADNEEDDDELHEQPPDVEE). The span at 249–266 (DNEEDDDELHEQPPDVEE) shows a compositional bias: acidic residues.

Belongs to the peptidase T1A family. The 26S proteasome consists of a 20S proteasome core and two 19S regulatory subunits. The 20S proteasome core is composed of 28 subunits that are arranged in four stacked rings, resulting in a barrel-shaped structure. The two end rings are each formed by seven alpha subunits, and the two central rings are each formed by seven beta subunits. The catalytic chamber with the active sites is on the inside of the barrel.

It is found in the cytoplasm. The protein localises to the nucleus. Functionally, the proteasome is a multicatalytic proteinase complex which is characterized by its ability to cleave peptides with Arg, Phe, Tyr, Leu, and Glu adjacent to the leaving group at neutral or slightly basic pH. The proteasome has an ATP-dependent proteolytic activity. The chain is Proteasome subunit alpha type-1 from Trypanosoma brucei rhodesiense.